We begin with the raw amino-acid sequence, 82 residues long: Consomatin Ar1 (82 aa).

The signal sequence occupies residues 1–22 (MQTAYWVVVMMMMVWVTAPVSE). Residues 23-60 (GGKLSDVIWGLVPDDLTPQIILQILNASRHAYRRVRPR) constitute a propeptide that is removed on maturation. Cysteines 64 and 69 form a disulfide. Trp66 carries the D-tryptophan modification. 3 positions are modified to 4-hydroxyproline: Pro70, Pro71, and Pro73. Residues 74-82 (QWIHPLVKR) constitute a propeptide that is removed on maturation.

It belongs to the conotoxin C superfamily. Consomatin family. In terms of tissue distribution, expressed by the venom duct.

Its subcellular location is the secreted. Functionally, moderately activates human somatostatin receptors (SSTR) with a preferential activation of SSTR1 and SSTR4. In vivo, does not cause behavioral changes in mice within a few minutes of intracranial injection, but causes a progressive loss of movement thereafter. Four to five hours after injection, mice recover, even with the highest dose tested. Shows antinociception and antihyperalgesia activities in two mouse models of acute pain, most probably by acting outside the central nervous system. In Conus arenatus (Sand-dusted cone), this protein is Consomatin Ar1.